The following is a 97-amino-acid chain: Mapk-regulated corepressor-interacting protein 1 (97 aa).

The tract at residues 1–30 (MTSSPVSRVVYNGKRTSSPRSPPSSSEIFT) is disordered. Ser21 and Ser24 each carry phosphoserine. A Phosphothreonine modification is found at Thr30. Residue Tyr41 is modified to Phosphotyrosine. The residue at position 79 (Lys79) is an N6-acetyllysine. The short motif at 80-84 (PIDLS) is the PXDLS motif element.

Belongs to the MCRIP family. Interacts (unphosphorylated form, via the PXDLS motif) with CTBP1, competitively inhibiting CTBP-ZEB1 interaction. Interacts with CTBP2. Interacts with MCRIP2. Interacts with DDX6. In terms of processing, phosphorylation by MAPK3/1 (ERK1/2) regulates MCRIP1 binding to CTBP(s).

It is found in the nucleus. It localises to the cytoplasm. The protein localises to the stress granule. Its function is as follows. The phosphorylation status of MCRIP1 functions as a molecular switch to regulate epithelial-mesenchymal transition. Unphosphorylated MCRIP1 binds to and inhibits the transcriptional corepressor CTBP(s). When phosphorylated by MAPK/ERK, MCRIP1 releases CTBP(s) resulting in transcriptional silencing of the E-cadherin gene and induction of epithelial-mesenchymal transition. This chain is Mapk-regulated corepressor-interacting protein 1, found in Homo sapiens (Human).